Reading from the N-terminus, the 474-residue chain is Ribosomal RNA small subunit methyltransferase F (474 aa).

S-adenosyl-L-methionine-binding positions include 121-127, Glu145, Asp172, and Asp190; that span reads ASAPGSK. Cys243 acts as the Nucleophile in catalysis.

It belongs to the class I-like SAM-binding methyltransferase superfamily. RsmB/NOP family.

It is found in the cytoplasm. The enzyme catalyses cytidine(1407) in 16S rRNA + S-adenosyl-L-methionine = 5-methylcytidine(1407) in 16S rRNA + S-adenosyl-L-homocysteine + H(+). Its function is as follows. Specifically methylates the cytosine at position 1407 (m5C1407) of 16S rRNA. This is Ribosomal RNA small subunit methyltransferase F from Shewanella piezotolerans (strain WP3 / JCM 13877).